The chain runs to 116 residues: Phosphoribosyl-AMP cyclohydrolase (116 aa).

D82 serves as a coordination point for Mg(2+). C83 contributes to the Zn(2+) binding site. Residues D84 and D86 each contribute to the Mg(2+) site. Residues C99 and C106 each contribute to the Zn(2+) site.

Belongs to the PRA-CH family. In terms of assembly, homodimer. Mg(2+) is required as a cofactor. Requires Zn(2+) as cofactor.

The protein localises to the cytoplasm. The enzyme catalyses 1-(5-phospho-beta-D-ribosyl)-5'-AMP + H2O = 1-(5-phospho-beta-D-ribosyl)-5-[(5-phospho-beta-D-ribosylamino)methylideneamino]imidazole-4-carboxamide. It participates in amino-acid biosynthesis; L-histidine biosynthesis; L-histidine from 5-phospho-alpha-D-ribose 1-diphosphate: step 3/9. Catalyzes the hydrolysis of the adenine ring of phosphoribosyl-AMP. The chain is Phosphoribosyl-AMP cyclohydrolase from Saccharopolyspora erythraea (strain ATCC 11635 / DSM 40517 / JCM 4748 / NBRC 13426 / NCIMB 8594 / NRRL 2338).